The primary structure comprises 768 residues: Eukaryotic elongation factor 2 kinase (768 aa).

A compositionally biased stretch (polar residues) spans 1–17 (MTIDTTNESDNSPTNSP). Positions 1-21 (MTIDTTNESDNSPTNSPGLEA) are disordered. One can recognise an Alpha-type protein kinase domain in the interval 102 to 309 (RYSAIRKQWT…ICETMDLSNF (208 aa)). An ATP-binding site is contributed by 279–284 (GDGNLG). A compositionally biased stretch (acidic residues) spans 402-411 (SEDEEDEEED). The interval 402 to 446 (SEDEEDEEEDYPRSEKSGNSQKSRRSRMSISTRSSGDESASRPRK) is disordered.

The protein belongs to the protein kinase superfamily. Alpha-type protein kinase family. Monomer or homodimer. Interacts with cmd-1 in the presence of Ca(2+).

It catalyses the reaction [translation elongation factor 2] + ATP = [translation elongation factor 2]-phosphate + ADP + H(+). With respect to regulation, calcium(2+)/calmodulin dependent activity. Undergoes calcium/calmodulin-dependent intramolecular autophosphorylation, and this results in it becoming partially calcium/calmodulin-independent. In terms of biological role, phosphorylates elongation factor-2 (eEF-2) at two threonine residues that are conserved in all eukaryotes and are located within a GTP-binding domain. Calcium(2+)/calmodulin dependent activity. Inactivates eEF-2 by catalyzing its phosphorylation. eEF-2 catalyzes the movement of the ribosome along mRNA during translation in eukaryotic cells. The protein is Eukaryotic elongation factor 2 kinase (efk-1) of Caenorhabditis elegans.